We begin with the raw amino-acid sequence, 119 residues long: Large ribosomal subunit protein uL18 (119 aa).

This sequence belongs to the universal ribosomal protein uL18 family. As to quaternary structure, part of the 50S ribosomal subunit; part of the 5S rRNA/L5/L18/L25 subcomplex. Contacts the 5S and 23S rRNAs.

Its function is as follows. This is one of the proteins that bind and probably mediate the attachment of the 5S RNA into the large ribosomal subunit, where it forms part of the central protuberance. The protein is Large ribosomal subunit protein uL18 of Borrelia hermsii (strain HS1 / DAH).